Here is a 197-residue protein sequence, read N- to C-terminus: MRSRTSVLTSSLAFLYFFGIVGRSALAMEETPASSMNLQHYNNMLNPMVFDDTMPEKRAYTYVSEYKRLPVYNFGIGKRWIDTNDNKRGRDYSFGLGKRRQYSFGLGKRNDNADYPLRLNLDYLPVDNPAFHSQENTDDFLEEKRGRQPYSFGLGKRAVHYSGGQPLGSKRPNDMLSQRYHFGLGKRMSEDEEESSQ.

The N-terminal stretch at 1-27 is a signal peptide; it reads MRSRTSVLTSSLAFLYFFGIVGRSALA. Positions 28–56 are excised as a propeptide; sequence MEETPASSMNLQHYNNMLNPMVFDDTMPE. Position 76 is an isoleucine amide (Ile76). Residues 80–86 constitute a propeptide that is removed on maturation; that stretch reads WIDTNDN. Leucine amide occurs at positions 96, 106, 154, and 184. The disordered stretch occupies residues 161 to 197; the sequence is YSGGQPLGSKRPNDMLSQRYHFGLGKRMSEDEEESSQ. Residues 188 to 197 constitute a propeptide that is removed on maturation; it reads MSEDEEESSQ.

Belongs to the allatostatin family.

Its subcellular location is the secreted. Its function is as follows. Neuropeptides. The sequence is that of Allatostatins from Apis mellifera (Honeybee).